A 339-amino-acid chain; its full sequence is RNA 3'-terminal phosphate cyclase (339 aa).

Residues Gln-103 and 283-287 (HLADQ) each bind ATP. His-308 acts as the Tele-AMP-histidine intermediate in catalysis.

The protein belongs to the RNA 3'-terminal cyclase family. Type 1 subfamily.

The protein localises to the cytoplasm. It catalyses the reaction a 3'-end 3'-phospho-ribonucleotide-RNA + ATP = a 3'-end 2',3'-cyclophospho-ribonucleotide-RNA + AMP + diphosphate. Catalyzes the conversion of 3'-phosphate to a 2',3'-cyclic phosphodiester at the end of RNA. The mechanism of action of the enzyme occurs in 3 steps: (A) adenylation of the enzyme by ATP; (B) transfer of adenylate to an RNA-N3'P to produce RNA-N3'PP5'A; (C) and attack of the adjacent 2'-hydroxyl on the 3'-phosphorus in the diester linkage to produce the cyclic end product. The biological role of this enzyme is unknown but it is likely to function in some aspects of cellular RNA processing. This is RNA 3'-terminal phosphate cyclase from Salmonella enteritidis PT4 (strain P125109).